Here is a 1282-residue protein sequence, read N- to C-terminus: Ribosome biogenesis protein BMS1 homolog (1282 aa).

Residues 1-24 (MEAKDQKKHRKKNSGPKAAKKKKR) show a composition bias toward basic residues. The tract at residues 1–43 (MEAKDQKKHRKKNSGPKAAKKKKRLLQDLQLGDEEDARKRNPK) is disordered. A Glycyl lysine isopeptide (Lys-Gly) (interchain with G-Cter in SUMO2) cross-link involves residue lysine 43. The Bms1-type G domain occupies 80–245 (PPPIVVVVMG…GRFITVMKFR (166 aa)). The tract at residues 89–96 (GPPKVGKS) is G1. 89–96 (GPPKVGKS) contributes to the ATP binding site. The interval 117–121 (PVTIV) is G2. The tract at residues 132-135 (ECGC) is G3. Residues 184–187 (THLD) form a G4 region. The residue at position 188 (serine 188) is a Phosphoserine. Residues 219-228 (LSGMVHGEYQ) form a G5 region. Disordered stretches follow at residues 397-557 (DSKP…ANCQ) and 575-667 (PTFD…ALKW). Glycyl lysine isopeptide (Lys-Gly) (interchain with G-Cter in SUMO2) cross-links involve residues lysine 399 and lysine 415. Acidic residues-rich tracts occupy residues 434–472 (GDED…ENAE) and 503–531 (DSDD…EDCT). Residues 535-550 (KGISGSKAAGEGSKAG) show a composition bias toward low complexity. Serine 552 bears the Phosphoserine mark. Over residues 588–610 (FASEDESEESSSLSAEEEDSENE) the composition is skewed to acidic residues. 2 positions are modified to phosphoserine: serine 625 and serine 639. A Glycyl lysine isopeptide (Lys-Gly) (interchain with G-Cter in SUMO2) cross-link involves residue lysine 646. A compositionally biased stretch (basic and acidic residues) spans 653–667 (EENNDSKETSGALKW). The residue at position 708 (threonine 708) is a Phosphothreonine. 2 disordered regions span residues 787 to 822 (ETGD…ESAK) and 1178 to 1202 (NKPK…IREP). Residue lysine 810 forms a Glycyl lysine isopeptide (Lys-Gly) (interchain with G-Cter in SUMO1); alternate linkage. Lysine 810 is covalently cross-linked (Glycyl lysine isopeptide (Lys-Gly) (interchain with G-Cter in SUMO2); alternate). Residue lysine 1206 forms a Glycyl lysine isopeptide (Lys-Gly) (interchain with G-Cter in SUMO2) linkage. The interval 1219-1282 (SQKMKKAKEQ…SLKGAEGQLQ (64 aa)) is disordered. Over residues 1228 to 1248 (QRHLHNKEHFRAKQKEEEEKL) the composition is skewed to basic and acidic residues. The span at 1249–1259 (KRQKDLRKKLF) shows a compositional bias: basic residues.

This sequence belongs to the TRAFAC class translation factor GTPase superfamily. Bms1-like GTPase family. BMS1 subfamily. In terms of assembly, part of the small subunit (SSU) processome, composed of more than 70 proteins and the RNA chaperone small nucleolar RNA (snoRNA) U3. Interacts with RCL1.

Its subcellular location is the nucleus. The protein resides in the nucleolus. The enzyme catalyses GTP + H2O = GDP + phosphate + H(+). GTPase required for the synthesis of 40S ribosomal subunits and for processing of pre-ribosomal RNA (pre-rRNA) at sites A0, A1, and A2. Controls access of pre-rRNA intermediates to RCL1 during ribosome biogenesis by binding RCL1 in a GTP-dependent manner, and delivering it to pre-ribosomes. GTP-binding and/or GTP hydrolysis may induce conformational rearrangements within the BMS1-RCL1 complex allowing the interaction of RCL1 with its RNA substrate. Required for RCL1 import into the nucleus. The polypeptide is Ribosome biogenesis protein BMS1 homolog (Homo sapiens (Human)).